A 636-amino-acid chain; its full sequence is ATP-dependent DNA helicase YoaA (636 aa).

The Helicase ATP-binding domain maps to 10 to 272 (QLAKAIPGFK…KDTQQLQKCA (263 aa)). Residue 45 to 52 (AGTGTGKT) coordinates ATP. Positions 108, 168, 173, and 179 each coordinate [4Fe-4S] cluster. The DEAH box motif lies at 225 to 228 (DEAH).

Belongs to the helicase family. DinG subfamily. Interacts with the DNA polymerase III subunit Chi (holC), probably as a 1:1 complex. The cofactor is [4Fe-4S] cluster. Mg(2+) serves as cofactor.

It catalyses the reaction Couples ATP hydrolysis with the unwinding of duplex DNA at the replication fork by translocating in the 5'-3' direction. This creates two antiparallel DNA single strands (ssDNA). The leading ssDNA polymer is the template for DNA polymerase III holoenzyme which synthesizes a continuous strand.. It carries out the reaction ATP + H2O = ADP + phosphate + H(+). Non-hydrolyzable ATP analogs ATP-gamma-S and adenylyl-imidodiphosphate (AMP-PNP) inhibit helicase activity. Its function is as follows. DNA-dependent ATPase and 5'-3' DNA helicase. Has single-stranded (ss)DNA-dependent ATPase activity and 5'-3' helicase activity on forked DNA; both activities were measure in a YoaA:HolC (chi) complex. Requires a 20-35 nucleotide (nt) 5'-ssDNA tail; dsDNA with a 20 nt gap is also unwound. Unwinds damaged 3' nascent ends (such as those terminated by 3' azidothymidine (AZT), 3' dideoxy-C or an abasic site on the translocating strand), to promote repair and AZT excision. Without HolC the protein has much lower activity which could be due to YoaA instability or helicase stimulation by HolC. Genetically identified as involved in the repair of replication forks and tolerance of the chain-terminating nucleoside analog AZT. May act in proofreading during nucleotide misincorporation, it appears to aid in the removal of potential A-to-T transversion mutations in ndk mutants. This is ATP-dependent DNA helicase YoaA (yoaA) from Escherichia coli (strain K12).